The following is a 130-amino-acid chain: Sec-independent protein translocase protein TatB (130 aa).

The chain crosses the membrane as a helical span at residues 1–21; that stretch reads MFDISFTELIVIGIVALVVIG. Residues 70–130 form a disordered region; the sequence is VDSFQNSVHS…TPKEPRQSGS (61 aa). Composition is skewed to basic and acidic residues over residues 80-89 and 96-111; these read EINKIQETAD and PEKESHAVESGGKTEP.

The protein belongs to the TatB family. The Tat system comprises two distinct complexes: a TatABC complex, containing multiple copies of TatA, TatB and TatC subunits, and a separate TatA complex, containing only TatA subunits. Substrates initially bind to the TatABC complex, which probably triggers association of the separate TatA complex to form the active translocon.

The protein resides in the cell inner membrane. Functionally, part of the twin-arginine translocation (Tat) system that transports large folded proteins containing a characteristic twin-arginine motif in their signal peptide across membranes. Together with TatC, TatB is part of a receptor directly interacting with Tat signal peptides. TatB may form an oligomeric binding site that transiently accommodates folded Tat precursor proteins before their translocation. This Nitrosomonas eutropha (strain DSM 101675 / C91 / Nm57) protein is Sec-independent protein translocase protein TatB.